The sequence spans 418 residues: MAGSLPPCVVDCGTGYTKLGYAGNTEPQFIIPSCIAIRESAKVVDQAQRRVLRGVDDLDFFIGDEAIDKPTYATKWPIRHGIIEDWDLMERFMEQVVFKYLRAEPEDHYFLMTEPPLNTPENREYLAEIMFESFNVPGLYIAVQAVLALAASWTSRQVGERTLTGIVIDSGDGVTHVIPVAEGYVIGSCIKHIPIAGRDITYFIQQLLREREVGIPPEQSLETAKAIKEKYCYICPDIVKEFAKYDVDPRKWIKQYTGINAINQKKFVIDVGYERFLGPEIFFHPEFANPDFMESISDVVDEVIQNCPIDVRRPLYKNVVLSGGSTMFRDFGRRLQRDLKRVVDARLRLSEELSGGRIKPKPVEVQVVTHHMQRYAVWFGGSMLASTPEFFQVCHTKKDYEEYGPSICRHNPVFGVMS.

It belongs to the actin family. ARP3 subfamily. In terms of assembly, interacts with the Arp2/3 complex composed of ARP2, ARP3, ARPC1B, ARPC1B/p41-ARC, ARPC2/p34-ARC, ARPC3/p21-ARC, ARPC4/p20-ARC and ARPC5/p16-ARC. Detected in fetal brain. Detected throughout the adult brain, in neurons from gray matter, but not in white matter. Detected in liver, skeletal muscle and pancreas. Detected in lung adenocarcinoma cells with low metastatic potential, but not in lung adenocarcinoma cells with high metastatic potential.

It localises to the cytoplasm. Its subcellular location is the cytoskeleton. The protein resides in the cell projection. Plays a role in the organization of the actin cytoskeleton. May function as ATP-binding component of the Arp2/3 complex which is involved in regulation of actin polymerization and together with an activating nucleation-promoting factor (NPF) mediates the formation of branched actin networks. May decrease the metastatic potential of tumors. This chain is Actin-related protein 3B (ACTR3B), found in Homo sapiens (Human).